The primary structure comprises 385 residues: Probable caffeine synthase 4 (385 aa).

S-adenosyl-L-homocysteine-binding residues include tyrosine 18, cysteine 62, asparagine 67, aspartate 101, leucine 102, serine 140, and phenylalanine 141. Tyrosine 158, glutamine 161, and phenylalanine 162 together coordinate caffeine. A Mg(2+)-binding site is contributed by asparagine 179. Residue threonine 238 coordinates caffeine. 3 residues coordinate Mg(2+): aspartate 261, phenylalanine 263, and asparagine 264. Tyrosine 369 contacts caffeine.

It belongs to the methyltransferase superfamily. Type-7 methyltransferase family. The cofactor is Mg(2+). In terms of tissue distribution, expressed in roots, stems, young and old leaves.

Its pathway is alkaloid biosynthesis. May be involved in the biosynthesis of caffeine. In Coffea arabica (Arabian coffee), this protein is Probable caffeine synthase 4.